Here is a 371-residue protein sequence, read N- to C-terminus: Ferrochelatase (371 aa).

Fe cation-binding residues include His-218 and Glu-299.

The protein belongs to the ferrochelatase family.

It localises to the cytoplasm. The catalysed reaction is heme b + 2 H(+) = protoporphyrin IX + Fe(2+). The protein operates within porphyrin-containing compound metabolism; protoheme biosynthesis; protoheme from protoporphyrin-IX: step 1/1. Catalyzes the ferrous insertion into protoporphyrin IX. In Cupriavidus necator (strain ATCC 17699 / DSM 428 / KCTC 22496 / NCIMB 10442 / H16 / Stanier 337) (Ralstonia eutropha), this protein is Ferrochelatase.